The following is a 1112-amino-acid chain: DNA-directed RNA polymerase subunit beta (1112 aa).

Residues 1087–1112 (VGGRRTPNRPTYENIGGPREMEFSED) form a disordered region.

The protein belongs to the RNA polymerase beta chain family. In terms of assembly, in cyanobacteria the RNAP catalytic core is composed of 2 alpha, 1 beta, 1 beta', 1 gamma and 1 omega subunit. When a sigma factor is associated with the core the holoenzyme is formed, which can initiate transcription.

The catalysed reaction is RNA(n) + a ribonucleoside 5'-triphosphate = RNA(n+1) + diphosphate. DNA-dependent RNA polymerase catalyzes the transcription of DNA into RNA using the four ribonucleoside triphosphates as substrates. The protein is DNA-directed RNA polymerase subunit beta of Gloeobacter violaceus (strain ATCC 29082 / PCC 7421).